Here is a 119-residue protein sequence, read N- to C-terminus: Large ribosomal subunit protein uL14 (119 aa).

This sequence belongs to the universal ribosomal protein uL14 family. As to quaternary structure, part of the 50S ribosomal subunit. Forms a cluster with proteins L3 and L19. In the 70S ribosome, L14 and L19 interact and together make contacts with the 16S rRNA in bridges B5 and B8.

Functionally, binds to 23S rRNA. Forms part of two intersubunit bridges in the 70S ribosome. The polypeptide is Large ribosomal subunit protein uL14 (Wolbachia pipientis wMel).